Here is a 102-residue protein sequence, read N- to C-terminus: Large ribosomal subunit protein mL63 (102 aa).

Belongs to the mitochondrion-specific ribosomal protein mL63 family.

The protein resides in the mitochondrion. The chain is Large ribosomal subunit protein mL63 (MRPL57) from Bos taurus (Bovine).